A 758-amino-acid chain; its full sequence is Actin filament-associated protein 1-like 1 (758 aa).

Residues 91–194 form a disordered region; the sequence is YRDSSENLSC…YESYDEEDEE (104 aa). Pro residues predominate over residues 102–120; that stretch reads LPPPPSAPPPPLPTTPPPE. The span at 137–148 shows a compositional bias: polar residues; the sequence is YITSRNSSSPPN. Low complexity predominate over residues 177 to 186; sequence ESDGLSSSYE. Positions 216–312 constitute a PH 1 domain; the sequence is DSRICAFLLR…WLRVIKEVIS (97 aa). Residues 335-369 form a disordered region; it reads SHDKTSDSDSAANGENSSLSSGKENRDTGKCRKGG. The span at 342–356 shows a compositional bias: polar residues; that stretch reads SDSAANGENSSLSSG. The region spanning 409-503 is the PH 2 domain; that stretch reads EVPCCGYLSV…WLGLLLAQTG (95 aa). Positions 602–690 form a coiled coil; it reads KTRAEEDARK…TEVKENLKKS (89 aa). The disordered stretch occupies residues 692 to 758; sequence AGGPTLGLAV…KAKEWEKKKP (67 aa). The segment covering 749-758 has biased composition (basic and acidic residues); sequence KAKEWEKKKP.

The protein resides in the cytoplasm. The protein localises to the cell projection. It is found in the podosome. It localises to the invadopodium. Its subcellular location is the cytoskeleton. The protein resides in the stress fiber. Its function is as follows. May be involved in podosome and invadosome formation. In Xenopus tropicalis (Western clawed frog), this protein is Actin filament-associated protein 1-like 1 (afap1l1).